Consider the following 352-residue polypeptide: Dysbindin (352 aa).

Phosphoserine is present on Ser11. Positions 88–176 form a coiled coil; that stretch reads EKKRTSLNEL…EAFKAELDTE (89 aa). The interval 173–325 is dysbindin; that stretch reads LDTEHTQKAL…DEEEVQVDTA (153 aa). Positions 243–256 match the Nuclear export signal motif; that stretch reads LMDISDQEALDVFL. The segment at 267–352 is disordered; the sequence is SPGVEMESNP…SDQCDSTQDI (86 aa). The span at 274–285 shows a compositional bias: polar residues; it reads SNPNQNEMSLQI. A compositionally biased stretch (low complexity) spans 286-301; it reads PSPSESASQPPASPSA. Phosphoserine occurs at positions 315, 340, and 343.

It belongs to the dysbindin family. Interacts with AP3M1 and TRIM32. Interacts (isoform 1 and isoform 2 only) with the DNA-dependent protein kinase complex DNA-PK; the interaction phosphorylates DTNBP1 in vitro. Interacts directly in this complex with XRCC5 and XRCC6. Interacts with XPO1; the interaction exports DTNBP1 out of the nucleus. Component of the biogenesis of lysosome-related organelles complex 1 (BLOC-1) composed of BLOC1S1, BLOC1S2, BLOC1S3, BLOC1S4, BLOC1S5, BLOC1S6, DTNBP1/BLOC1S7 and SNAPIN/BLOC1S8. The BLOC-1 complex associates with the AP-3 protein complex and membrane protein cargos. This BLOC-1 complex also associates with the BLOC-2 complex in endosomes. Binds to DTNA and DTNB but may not be a physiological binding partner. Interacts (via its coiled coil domain) with KXD1. Interacts with AP3B2, BLOC1S5, BLOC1S6, CMYA5, PI4K2, RNF151 and SNAPIN/BLOC1S8. Interacts with XPO1; the interaction exports DTNBP1 out of the nucleus. Ubiquitinated by TRIM32. Ubiquitination leads to DTNBP1 degradation. Detected in brain, in hippocampus and dentate gyrus neurons. Detected at axon bundles and axon terminals, notably in the cerebellum and hippocampus. Detected in neuropil in hippocampus, lateral septum, basal ganglia and substantia nigra. Highly expressed in pyramidal cells of hippocampus CA2 and CA3. Detected at the heart and skeletal muscle sarcolemma (at protein level). Ubiquitously expressed. The highest expression is observed in testis, liver, kidney, brain, heart and lung. Expressed at lower levels in stomach and small intestine.

It localises to the cytoplasm. The protein resides in the cytoplasmic vesicle membrane. It is found in the endosome membrane. Its subcellular location is the melanosome membrane. The protein localises to the postsynaptic density. It localises to the endoplasmic reticulum. The protein resides in the nucleus. It is found in the cytoplasmic vesicle. Its subcellular location is the secretory vesicle. The protein localises to the synaptic vesicle membrane. It localises to the postsynaptic cell membrane. Functionally, component of the BLOC-1 complex, a complex that is required for normal biogenesis of lysosome-related organelles (LRO), such as platelet dense granules and melanosomes. In concert with the AP-3 complex, the BLOC-1 complex is required to target membrane protein cargos into vesicles assembled at cell bodies for delivery into neurites and nerve terminals. The BLOC-1 complex, in association with SNARE proteins, is also proposed to be involved in neurite extension. Associates with the BLOC-2 complex to facilitate the transport of TYRP1 independent of AP-3 function. Plays a role in synaptic vesicle trafficking and in neurotransmitter release. Plays a role in the regulation of cell surface exposure of DRD2. May play a role in actin cytoskeleton reorganization and neurite outgrowth. May modulate MAPK8 phosphorylation. Appears to promote neuronal transmission and viability through regulating the expression of SNAP25 and SYN1, modulating PI3-kinase-Akt signaling and influencing glutamatergic release. Regulates the expression of SYN1 through binding to its promoter. Modulates prefrontal cortical activity via the dopamine/D2 pathway. In Mus musculus (Mouse), this protein is Dysbindin (Dtnbp1).